The chain runs to 759 residues: GTPase-activating protein rrc-1 (759 aa).

The SH3 domain occupies 164-243 (PAIAAAVVTK…PRDCVMLIDD (80 aa)). The Rho-GAP domain occupies 280–473 (LELTDLYMRT…FFIENSESLF (194 aa)). A disordered region spans residues 591-624 (ARSMRPTSRPPPSPRTRRARFSNGSSNNVQKLNE). The segment covering 612 to 622 (SNGSSNNVQKL) has biased composition (polar residues).

As to expression, expressed in coelomocytes, excretory cells, uterine-seam cells and GLR cells.

Functions as a GTPase-activating protein (GAP) for ced-10/rac-1 and CDC42. The chain is GTPase-activating protein rrc-1 (rrc-1) from Caenorhabditis elegans.